The primary structure comprises 117 residues: cAMP-regulated phosphoprotein 19-A (117 aa).

Positions 1–37 are enriched in basic and acidic residues; that stretch reads MSGENQETKAQEESSALEQKEIDDKVVSPEKSEEIKL. Residues 1–54 are disordered; the sequence is MSGENQETKAQEESSALEQKEIDDKVVSPEKSEEIKLKARYPNLGPKPGGSDFL. Position 28 is a phosphoserine; by CDK2 (Ser28). A Phosphoserine; by GWL modification is found at Ser67. Positions 78–117 are disordered; it reads KNKQLPTAASDKTEVTGDHIPTPQDLPQRKPSLVASKLAG. Residue Thr99 is modified to Phosphothreonine; by CDK2. Ser109 carries the phosphoserine; by PKA modification.

The protein belongs to the endosulfine family. In terms of assembly, interacts (when phosphorylated at Ser-67) with ppp2r2d. Phosphorylation at Ser-67 by gwl during mitosis is essential for interaction with ppp2r2d (PR55-delta) and subsequent inactivation of PP2A. Phosphorylated by PKA.

The protein resides in the cytoplasm. Functionally, protein phosphatase inhibitor that specifically inhibits protein phosphatase 2A (PP2A) during mitosis. When phosphorylated at Ser-67 during mitosis, specifically interacts with ppp2r2d (PR55-delta) and inhibits its activity, leading to inactivation of PP2A, an essential condition to keep cyclin-B1-CDK1 activity high during M phase. This chain is cAMP-regulated phosphoprotein 19-A (arpp19-a), found in Xenopus laevis (African clawed frog).